A 425-amino-acid chain; its full sequence is Serine--tRNA ligase (425 aa).

Position 229–231 (229–231 (TSE)) interacts with L-serine. ATP-binding positions include 259-261 (RKE) and valine 275. Position 282 (glutamate 282) interacts with L-serine. 349 to 352 (EITS) lines the ATP pocket. Residue threonine 384 coordinates L-serine.

Belongs to the class-II aminoacyl-tRNA synthetase family. Type-1 seryl-tRNA synthetase subfamily. As to quaternary structure, homodimer. The tRNA molecule binds across the dimer.

It is found in the cytoplasm. The enzyme catalyses tRNA(Ser) + L-serine + ATP = L-seryl-tRNA(Ser) + AMP + diphosphate + H(+). The catalysed reaction is tRNA(Sec) + L-serine + ATP = L-seryl-tRNA(Sec) + AMP + diphosphate + H(+). Its pathway is aminoacyl-tRNA biosynthesis; selenocysteinyl-tRNA(Sec) biosynthesis; L-seryl-tRNA(Sec) from L-serine and tRNA(Sec): step 1/1. Functionally, catalyzes the attachment of serine to tRNA(Ser). Is also able to aminoacylate tRNA(Sec) with serine, to form the misacylated tRNA L-seryl-tRNA(Sec), which will be further converted into selenocysteinyl-tRNA(Sec). This chain is Serine--tRNA ligase, found in Borreliella afzelii (strain PKo) (Borrelia afzelii).